A 545-amino-acid chain; its full sequence is CTP synthase (545 aa).

Residues 1–266 are amidoligase domain; sequence MTTNYIFVTG…DDYICKRFSL (266 aa). Ser-14 lines the CTP pocket. Residue Ser-14 coordinates UTP. ATP is bound by residues 15 to 20 and Asp-72; that span reads SLGKGI. Mg(2+) is bound by residues Asp-72 and Glu-140. CTP contacts are provided by residues 147–149, 187–192, and Lys-223; these read DIE and KTKPTQ. Residues 187–192 and Lys-223 contribute to the UTP site; that span reads KTKPTQ. An ATP-binding site is contributed by 239–241; sequence KDV. The Glutamine amidotransferase type-1 domain maps to 291–542; that stretch reads TIGMVGKYIE…VKAASEYQKR (252 aa). Residue Gly-352 coordinates L-glutamine. The active-site Nucleophile; for glutamine hydrolysis is Cys-379. L-glutamine contacts are provided by residues 380–383, Glu-403, and Arg-470; that span reads LGMQ. Catalysis depends on residues His-515 and Glu-517.

The protein belongs to the CTP synthase family. In terms of assembly, homotetramer.

It carries out the reaction UTP + L-glutamine + ATP + H2O = CTP + L-glutamate + ADP + phosphate + 2 H(+). It catalyses the reaction L-glutamine + H2O = L-glutamate + NH4(+). The enzyme catalyses UTP + NH4(+) + ATP = CTP + ADP + phosphate + 2 H(+). Its pathway is pyrimidine metabolism; CTP biosynthesis via de novo pathway; CTP from UDP: step 2/2. With respect to regulation, allosterically activated by GTP, when glutamine is the substrate; GTP has no effect on the reaction when ammonia is the substrate. The allosteric effector GTP functions by stabilizing the protein conformation that binds the tetrahedral intermediate(s) formed during glutamine hydrolysis. Inhibited by the product CTP, via allosteric rather than competitive inhibition. Catalyzes the ATP-dependent amination of UTP to CTP with either L-glutamine or ammonia as the source of nitrogen. Regulates intracellular CTP levels through interactions with the four ribonucleotide triphosphates. The chain is CTP synthase from Klebsiella pneumoniae (strain 342).